A 261-amino-acid chain; its full sequence is Pimeloyl-[acyl-carrier protein] methyl ester esterase (261 aa).

The 226-residue stretch at 16-241 (LVLIHGWGMN…QASHAPFISH (226 aa)) folds into the AB hydrolase-1 domain. Substrate contacts are provided by residues Trp22, 82 to 83 (SL), and 143 to 147 (FMTLQ). Ser82 functions as the Nucleophile in the catalytic mechanism. Active-site residues include Asp207 and His235. His235 provides a ligand contact to substrate.

It belongs to the AB hydrolase superfamily. Carboxylesterase BioH family. In terms of assembly, monomer.

The protein localises to the cytoplasm. It catalyses the reaction 6-carboxyhexanoyl-[ACP] methyl ester + H2O = 6-carboxyhexanoyl-[ACP] + methanol + H(+). Its pathway is cofactor biosynthesis; biotin biosynthesis. Functionally, the physiological role of BioH is to remove the methyl group introduced by BioC when the pimeloyl moiety is complete. It allows to synthesize pimeloyl-ACP via the fatty acid synthetic pathway through the hydrolysis of the ester bonds of pimeloyl-ACP esters. The sequence is that of Pimeloyl-[acyl-carrier protein] methyl ester esterase from Aliivibrio salmonicida (strain LFI1238) (Vibrio salmonicida (strain LFI1238)).